A 917-amino-acid chain; its full sequence is Serine/arginine repetitive matrix protein 1 (917 aa).

Methionine 1 bears the N-acetylmethionine mark. The interval methionine 1–lysine 151 is necessary for DNA and RNA-binding. The interval methionine 1–lysine 156 is necessary for mRNA 3'-end cleavage and cytoplasmic accumulation. Residue arginine 7 is modified to Citrulline. The 100-residue stretch at glutamine 27 to leucine 126 folds into the PWI domain. Residue lysine 127 forms a Glycyl lysine isopeptide (Lys-Gly) (interchain with G-Cter in SUMO2) linkage. Over residues glutamate 139–arginine 170 the composition is skewed to basic and acidic residues. The interval glutamate 139–serine 917 is disordered. Lysine 140 carries the N6-acetyllysine modification. Residues serine 171 to serine 207 show a composition bias toward basic residues. Residues proline 214 to serine 234 show a composition bias toward basic and acidic residues. Threonine 220 carries the post-translational modification Phosphothreonine. Serine 227 carries the phosphoserine modification. Lysine 231 is covalently cross-linked (Glycyl lysine isopeptide (Lys-Gly) (interchain with G-Cter in SUMO1); alternate). A Glycyl lysine isopeptide (Lys-Gly) (interchain with G-Cter in SUMO2); alternate cross-link involves residue lysine 231. 2 positions are modified to phosphoserine: serine 234 and serine 240. Threonine 241 is subject to Phosphothreonine. Residues lysine 246–arginine 275 are compositionally biased toward basic and acidic residues. A Glycyl lysine isopeptide (Lys-Gly) (interchain with G-Cter in SUMO2) cross-link involves residue lysine 249. At serine 260 the chain carries Phosphoserine. Basic residues-rich tracts occupy residues proline 276 to proline 329 and proline 336 to serine 351. Residues arginine 300–proline 702 are necessary for speckles and matrix localization. The span at serine 352–arginine 368 shows a compositional bias: low complexity. 4 positions are modified to phosphoserine: serine 389, serine 391, serine 393, and serine 402. Threonine 406 is modified (phosphothreonine). Serine 414 is subject to Phosphoserine. Threonine 416 is modified (phosphothreonine). A phosphoserine mark is found at serine 420, serine 429, serine 431, and serine 436. Polar residues predominate over residues valine 428–lysine 438. A Glycyl lysine isopeptide (Lys-Gly) (interchain with G-Cter in SUMO2) cross-link involves residue lysine 447. Serine 450 and serine 452 each carry phosphoserine. A Glycyl lysine isopeptide (Lys-Gly) (interchain with G-Cter in SUMO2) cross-link involves residue lysine 459. Residues serine 463 and serine 465 each carry the phosphoserine modification. Residue lysine 472 forms a Glycyl lysine isopeptide (Lys-Gly) (interchain with G-Cter in SUMO2) linkage. At serine 478 the chain carries Phosphoserine. The segment covering serine 478–serine 501 has biased composition (low complexity). Residues glutamate 503–glycine 518 are compositionally biased toward basic and acidic residues. Residues serine 524, serine 526, serine 528, serine 530, serine 532, serine 563, and serine 565 each carry the phosphoserine modification. Positions serine 557–serine 574 are enriched in basic residues. Residue threonine 569 is modified to Phosphothreonine. Phosphoserine occurs at positions 574 and 576. Residues proline 581–serine 606 show a composition bias toward basic residues. Residues threonine 586, threonine 588, and threonine 595 each carry the phosphothreonine modification. Serine 597 carries the post-translational modification Phosphoserine. Low complexity predominate over residues proline 607–serine 619. The residue at position 610 (tyrosine 610) is a Phosphotyrosine. A phosphoserine mark is found at serine 611, serine 619, and serine 621. Threonine 628 is modified (phosphothreonine). Residues serine 630, serine 640, serine 642, serine 650, and serine 652 each carry the phosphoserine modification. A compositionally biased stretch (basic residues) spans proline 635–serine 650. Over residues threonine 663–glycine 677 the composition is skewed to basic residues. Residues serine 699–valine 713 show a composition bias toward pro residues. 6 positions are modified to phosphoserine: serine 708, serine 709, serine 718, serine 720, serine 726, and serine 728. Composition is skewed to low complexity over residues arginine 714 to arginine 732, alanine 749 to proline 772, and serine 782 to valine 799. Position 731 is a phosphothreonine (threonine 731). 10 positions are modified to phosphoserine: serine 751, serine 753, serine 761, serine 765, serine 767, serine 769, serine 782, serine 786, serine 788, and serine 790. A Phosphothreonine modification is found at threonine 791. Residues serine 794 and serine 804 each carry the phosphoserine modification. Threonine 806 is modified (phosphothreonine). Phosphoserine is present on residues serine 808, serine 810, and serine 815. Positions lysine 822–glutamate 847 are enriched in basic residues. Over residues valine 850 to proline 879 the composition is skewed to low complexity. Lysine 882 participates in a covalent cross-link: Glycyl lysine isopeptide (Lys-Gly) (interchain with G-Cter in SUMO2). Threonine 885 is modified (phosphothreonine). Serine 887 carries the post-translational modification Phosphoserine. Positions aspartate 895–leucine 905 are enriched in basic and acidic residues. Position 914 is a phosphoserine (serine 914).

It belongs to the splicing factor SR family. As to quaternary structure, identified in the spliceosome C complex. Found in a pre-mRNA splicing complex with SFRS4, SFRS5, SNRP70, SNRPA1, SRRM1 and SRRM2. Component of the minor spliceosome, which splices U12-type introns. Found in a pre-mRNA exonic splicing enhancer (ESE) complex with SNRP70, SNRPA1, SRRM1 and TRA2B/SFRS10. Found in a mRNA splicing-dependent exon junction complex (EJC) with DEK, PRPF8, NCBP1, RBM8A, RNPS1, SRRM1 and ALYREF/THOC4. Interacts with DDX39B, CPSF1, RBM8A, RNPS1, and ALYREF/THOC4. Seems to be a compound of RNA export complexes that are released from speckles in a ATP-dependent manner. In terms of processing, phosphorylated on multiple serine and threonine residues by DYRK3 during the G2-to-M transition, after the nuclear-envelope breakdown. Phosphorylation by DYRK3 promotes disassembly of nuclear speckles. Citrullinated by PADI4.

Part of pre- and post-splicing multiprotein mRNP complexes. As a component of the minor spliceosome, involved in the splicing of U12-type introns in pre-mRNAs. Involved in numerous pre-mRNA processing events. Promotes constitutive and exonic splicing enhancer (ESE)-dependent splicing activation by bridging together sequence-specific (SR family proteins, SFRS4, SFRS5 and TRA2B/SFRS10) and basal snRNP (SNRP70 and SNRPA1) factors of the spliceosome. Stimulates mRNA 3'-end cleavage independently of the formation of an exon junction complex. Binds both pre-mRNA and spliced mRNA 20-25 nt upstream of exon-exon junctions. Binds RNA and DNA with low sequence specificity and has similar preference for either double- or single-stranded nucleic acid substrates. This is Serine/arginine repetitive matrix protein 1 (SRRM1) from Pongo abelii (Sumatran orangutan).